We begin with the raw amino-acid sequence, 78 residues long: Exodeoxyribonuclease 7 small subunit (78 aa).

Belongs to the XseB family. Heterooligomer composed of large and small subunits.

The protein localises to the cytoplasm. It carries out the reaction Exonucleolytic cleavage in either 5'- to 3'- or 3'- to 5'-direction to yield nucleoside 5'-phosphates.. Functionally, bidirectionally degrades single-stranded DNA into large acid-insoluble oligonucleotides, which are then degraded further into small acid-soluble oligonucleotides. The chain is Exodeoxyribonuclease 7 small subunit from Cutibacterium acnes (strain DSM 16379 / KPA171202) (Propionibacterium acnes).